The chain runs to 295 residues: Trimeric intracellular cation channel type A (295 aa).

Topologically, residues 1–18 (MELLSALSLGELALSFSR) are lumenal. The chain crosses the membrane as a helical span at residues 19–39 (VPLFPVFDLSYFIVSILYLKY). Over 40–51 (EPGAVELSRRHP) the chain is Cytoplasmic. A helical transmembrane segment spans residues 52–72 (VASWLCAMLHCFGSYILADLL). Topologically, residues 73–85 (LGEPLIDYFSNNS) are lumenal. G74 lines the Ca(2+) pocket. Residues 86–106 (SILLASAVWYLIFFCPLDLFY) form a helical membrane-spanning segment. Residues 107-144 (KCVCFLPVKLIFVAMKEVVRVRKIAVGIHHAHHHYHHG) lie on the Cytoplasmic side of the membrane. K122 and R126 together coordinate a 1,2-diacyl-sn-glycero-3-phospho-(1D-myo-inositol-4,5-bisphosphate). The helical transmembrane segment at 145–165 (WFIMIATGWVKGSGVALLSNV) threads the bilayer. At 166-178 (EQLLRGVWKPETN) the chain is on the lumenal side. A helical membrane pass occupies residues 179 to 199 (EILHMSFPTKASLYGAILFTL). Residues 200–209 (QQTRWLPVSK) are Cytoplasmic-facing. The helical transmembrane segment at 210–230 (ASLIFIFTMFMVSCKVFLTAT) threads the bilayer. Residues 231-234 (HSHS) are Lumenal-facing. A helical transmembrane segment spans residues 235 to 255 (SPFDVLEAYVCPVLFGTGSGG). Residues 256-295 (DHPQDNHGAWPGGPPSGALATKSKEELSEGSRKKKTKKAD) lie on the Cytoplasmic side of the membrane. The segment at 256–295 (DHPQDNHGAWPGGPPSGALATKSKEELSEGSRKKKTKKAD) is disordered. Residues 277–286 (KSKEELSEGS) show a composition bias toward basic and acidic residues.

The protein belongs to the TMEM38 family. In terms of assembly, homotrimer; conformation seems to be controled by binding to diacylglycerol (DAG).

Its subcellular location is the sarcoplasmic reticulum membrane. It is found in the nucleus membrane. The enzyme catalyses K(+)(in) = K(+)(out). With respect to regulation, channel activity is activated by a change of voltage within the sarcoplasmic reticulum lumen and blocked by luminal high Ca(2+) levels. Intracellular monovalent cation channel required for maintenance of rapid intracellular calcium release. Acts as a potassium counter-ion channel that functions in synchronization with calcium release from intracellular stores. Opened by a change of voltage within the sarcoplasmic reticulum lumen. The chain is Trimeric intracellular cation channel type A from Oryctolagus cuniculus (Rabbit).